The chain runs to 198 residues: Probable GTP-binding protein EngB (198 aa).

In terms of domain architecture, EngB-type G spans 22-195; sequence NIPEVALAGR…LEVIGRWVGL (174 aa). Residues 30-37, 57-61, 75-78, 142-145, and 174-176 each bind GTP; these read GRSNVGKS, GRTRL, DLPG, TKAD, and FSA. Residues Ser-37 and Thr-59 each coordinate Mg(2+).

The protein belongs to the TRAFAC class TrmE-Era-EngA-EngB-Septin-like GTPase superfamily. EngB GTPase family. It depends on Mg(2+) as a cofactor.

Necessary for normal cell division and for the maintenance of normal septation. This chain is Probable GTP-binding protein EngB, found in Pelotomaculum thermopropionicum (strain DSM 13744 / JCM 10971 / SI).